We begin with the raw amino-acid sequence, 415 residues long: 6-phospho-beta-glucosidase BglT (415 aa).

1 to 64 (MRIAVIGGGS…DRFKVLISDT (64 aa)) contacts NAD(+). Substrate is bound by residues R87 and N140. C162 serves as a coordination point for Mn(2+). Position 163 (N163) interacts with substrate. H192 is a Mn(2+) binding site. Y241 serves as the catalytic Proton acceptor. R261 contributes to the substrate binding site.

The protein belongs to the glycosyl hydrolase 4 family. In terms of assembly, homodimer or homotetramer. Exists in a homodimer/homotetramer equilibrium state in solution. It depends on NAD(+) as a cofactor. The cofactor is Mn(2+).

The catalysed reaction is 6-phospho-beta-D-glucosyl-(1-&gt;4)-D-glucose + H2O = D-glucose 6-phosphate + D-glucose. In terms of biological role, hydrolyzes cellobiose 6'-phosphate into glucose 6-phosphate (Glc6P) and glucose. This is 6-phospho-beta-glucosidase BglT (bglT) from Thermotoga maritima (strain ATCC 43589 / DSM 3109 / JCM 10099 / NBRC 100826 / MSB8).